The sequence spans 375 residues: Anhydro-N-acetylmuramic acid kinase (375 aa).

14–21 serves as a coordination point for ATP; it reads GTSMDGAD.

Belongs to the anhydro-N-acetylmuramic acid kinase family.

The catalysed reaction is 1,6-anhydro-N-acetyl-beta-muramate + ATP + H2O = N-acetyl-D-muramate 6-phosphate + ADP + H(+). It participates in amino-sugar metabolism; 1,6-anhydro-N-acetylmuramate degradation. The protein operates within cell wall biogenesis; peptidoglycan recycling. Its function is as follows. Catalyzes the specific phosphorylation of 1,6-anhydro-N-acetylmuramic acid (anhMurNAc) with the simultaneous cleavage of the 1,6-anhydro ring, generating MurNAc-6-P. Is required for the utilization of anhMurNAc either imported from the medium or derived from its own cell wall murein, and thus plays a role in cell wall recycling. The chain is Anhydro-N-acetylmuramic acid kinase from Cupriavidus pinatubonensis (strain JMP 134 / LMG 1197) (Cupriavidus necator (strain JMP 134)).